The chain runs to 680 residues: Tumor protein 63 (680 aa).

The transcription activation stretch occupies residues 1 to 107 (MNFETSRCAT…MQDSDLSDPM (107 aa)). The segment covering 123-157 (QIQNGSSSTSPYNTDHAQNSVTAPSPYAQPSSTFD) has biased composition (polar residues). Residues 123 to 171 (QIQNGSSSTSPYNTDHAQNSVTAPSPYAQPSSTFDALSPSPAIPSNTDY) are disordered. The DNA-binding element occupies 170–362 (DYPGPHSFDV…KADEDSIRKQ (193 aa)). Zn(2+) is bound by residues cysteine 244, histidine 247, cysteine 308, and cysteine 312. Over residues 351–360 (DRKADEDSIR) the composition is skewed to basic and acidic residues. Disordered stretches follow at residues 351–393 (DRKA…IKKR) and 436–472 (RQQQ…MNSM). Positions 352 to 388 (RKADEDSIRKQQVSDSAKNGDGTKRPFRQNTHGIQMT) are interaction with HIPK2. Residues 379-389 (RQNTHGIQMTS) are compositionally biased toward polar residues. Residues 394-443 (RSPDDELLYLPVRGRETYEMLLKIKESLELMQYLPQHTIETYRQQQQQQH) form an oligomerization region. Over residues 437–463 (QQQQQQHQHLLQKQTSMQSQSSYGNSS) the composition is skewed to low complexity. The SAM domain occupies 541 to 607 (PPYPTDCSIV…WKGILDHRQL (67 aa)). The tract at residues 610–680 (FSSPPHLLRT…KQQRIKEEGE (71 aa)) is transactivation inhibition. Lysine 676 participates in a covalent cross-link: Glycyl lysine isopeptide (Lys-Gly) (interchain with G-Cter in SUMO).

Belongs to the p53 family. Binds DNA as a homotetramer. Isoform composition of the tetramer may determine transactivation activity. Interacts with HIPK2. Interacts with SSRP1, leading to stimulate coactivator activity. Interacts with PDS5A. Interacts (via activation domain) with NOC2L. Interacts with WWP1. Zn(2+) is required as a cofactor. Post-translationally, may be sumoylated. In terms of processing, ubiquitinated. Polyubiquitination involves WWP1 and leads to proteasomal degradation of this protein. In terms of tissue distribution, widely expressed, notably in thymus, prostate, placenta and skeletal muscle, although the precise isoform varies according to tissue type. Progenitor cell layers of skin, breast and prostate express high levels of DeltaN-type isoforms.

The protein localises to the nucleus. Functionally, acts as a sequence specific DNA binding transcriptional activator or repressor. The isoforms contain a varying set of transactivation and auto-regulating transactivation inhibiting domains thus showing an isoform specific activity. May be required in conjunction with TP73/p73 for initiation of p53/TP53 dependent apoptosis in response to genotoxic insults and the presence of activated oncogenes. Involved in Notch signaling by probably inducing JAG1 and JAG2. Activates transcription of the p21 promoter. Activates RIPK4 transcription. Plays a role in the regulation of epithelial morphogenesis. The ratio of DeltaN-type and TA*-type isoforms may govern the maintenance of epithelial stem cell compartments and regulate the initiation of epithelial stratification from the undifferentiated embryonal ectoderm. Required for limb formation from the apical ectodermal ridge. The protein is Tumor protein 63 (Tp63) of Mus musculus (Mouse).